The sequence spans 393 residues: Na(+)/H(+) antiporter NhaA (393 aa).

12 helical membrane-spanning segments follow: residues 23-43 (AGGITLMAAAALALIVANSPF), 58-78 (LSLAHWINDALMAKFFLLVGL), 96-116 (MLPGIAAAGGVILPAIIFAVL), 126-146 (GWAVPSATDIAFALGVLSLLG), 155-175 (VFLATLAILDDLAAVVIIAIF), 178-198 (AEISMPYLGAAFITAAVLFVM), 201-221 (MGVVKLLPYLISAVILWFFVF), 224-244 (GVHATVAGVVAALMIPLKPAP), 265-285 (VAFIVVPIFGFANAGISFKGL), 298-318 (ILLGLFLGKQFGVFGAAWLAI), 334-354 (LYGVAILCGIGFTMSIFIGLL), and 367-387 (IGVLSGSALSAICGYLLLRAA).

It belongs to the NhaA Na(+)/H(+) (TC 2.A.33) antiporter family.

It is found in the cell inner membrane. It catalyses the reaction Na(+)(in) + 2 H(+)(out) = Na(+)(out) + 2 H(+)(in). Its function is as follows. Na(+)/H(+) antiporter that extrudes sodium in exchange for external protons. In Brucella suis (strain ATCC 23445 / NCTC 10510), this protein is Na(+)/H(+) antiporter NhaA.